A 302-amino-acid polypeptide reads, in one-letter code: Olfactory receptor 51H1 (302 aa).

Topologically, residues 1 to 27 (MTNLNASQANHRNFILTGIPGTPDKNP) are extracellular. The N-linked (GlcNAc...) asparagine glycan is linked to asparagine 5. The chain crosses the membrane as a helical span at residues 28–48 (WLAFPLGFLYTLTLLGNGTIL). The Cytoplasmic segment spans residues 49–56 (AVIKVEPS). The chain crosses the membrane as a helical span at residues 57-77 (LHEPTYYFLSILALTDVSLSM). The Extracellular portion of the chain corresponds to 78-101 (STLPSMLSIYWFNAPQIVFDACIM). Cysteine 99 and cysteine 191 are joined by a disulfide. The helical transmembrane segment at 102–122 (QMFFIHVFGIVESGVLVSMAF) threads the bilayer. Topologically, residues 123–141 (DRFVAIRNPLHYVSILTHD) are cytoplasmic. A helical transmembrane segment spans residues 142–162 (VIRKTGIAVLTRAVCVVFPVP). Residues 163–198 (FLIKCLPFCHSNVLSHSYCLHQNMMRLACASTRINS) lie on the Extracellular side of the membrane. Residues 199–219 (LYGLIVVIFTLGLDVLLTLLS) form a helical membrane-spanning segment. Residues 220-239 (YVLTLKTVLGIVSRGERLKT) lie on the Cytoplasmic side of the membrane. The helical transmembrane segment at 240 to 260 (LSTCLSHMSTVLLFYVPFMGA) threads the bilayer. At 261–276 (ASMIHRFWEHLSPVVH) the chain is on the extracellular side. The helical transmembrane segment at 277-297 (MVMADIYLLLPPVLNPIVYSV) threads the bilayer. Topologically, residues 298–302 (KTKQI) are cytoplasmic.

It belongs to the G-protein coupled receptor 1 family.

The protein resides in the cell membrane. Functionally, odorant receptor. The chain is Olfactory receptor 51H1 (OR51H1) from Homo sapiens (Human).